Reading from the N-terminus, the 375-residue chain is Arsenite methyltransferase (375 aa).

S335 bears the Phosphoserine mark.

This sequence belongs to the methyltransferase superfamily. Arsenite methyltransferase family.

The protein resides in the cytoplasm. It is found in the cytosol. The enzyme catalyses arsenic triglutathione + [thioredoxin]-dithiol + S-adenosyl-L-methionine + 2 H2O = methylarsonous acid + [thioredoxin]-disulfide + 3 glutathione + S-adenosyl-L-homocysteine + H(+). It catalyses the reaction arsenic triglutathione + 2 [thioredoxin]-dithiol + 2 S-adenosyl-L-methionine + H2O = dimethylarsinous acid + 2 [thioredoxin]-disulfide + 3 glutathione + 2 S-adenosyl-L-homocysteine + 2 H(+). It carries out the reaction arsenic triglutathione + 3 [thioredoxin]-dithiol + 3 S-adenosyl-L-methionine = trimethylarsine + 3 [thioredoxin]-disulfide + 3 glutathione + 3 S-adenosyl-L-homocysteine + 3 H(+). Its function is as follows. Catalyzes the transfer of a methyl group from AdoMet to trivalent arsenicals producing methylated and dimethylated arsenicals. It methylates arsenite to form methylarsonate, Me-AsO(3)H(2), which is reduced by methylarsonate reductase to methylarsonite, Me-As(OH)2. Methylarsonite is also a substrate and it is converted into the much less toxic compound dimethylarsinate (cacodylate), Me(2)As(O)-OH. This chain is Arsenite methyltransferase (AS3MT), found in Homo sapiens (Human).